The following is a 304-amino-acid chain: Aspartate carbamoyltransferase catalytic subunit (304 aa).

Carbamoyl phosphate contacts are provided by Arg49 and Thr50. L-aspartate is bound at residue Lys77. Residues Arg99, His127, and Gln130 each coordinate carbamoyl phosphate. Positions 160 and 211 each coordinate L-aspartate. Ala252 and Pro253 together coordinate carbamoyl phosphate.

It belongs to the aspartate/ornithine carbamoyltransferase superfamily. ATCase family. As to quaternary structure, heterododecamer (2C3:3R2) of six catalytic PyrB chains organized as two trimers (C3), and six regulatory PyrI chains organized as three dimers (R2).

The enzyme catalyses carbamoyl phosphate + L-aspartate = N-carbamoyl-L-aspartate + phosphate + H(+). Its pathway is pyrimidine metabolism; UMP biosynthesis via de novo pathway; (S)-dihydroorotate from bicarbonate: step 2/3. Catalyzes the condensation of carbamoyl phosphate and aspartate to form carbamoyl aspartate and inorganic phosphate, the committed step in the de novo pyrimidine nucleotide biosynthesis pathway. The polypeptide is Aspartate carbamoyltransferase catalytic subunit (Bacillus cereus (strain ZK / E33L)).